The primary structure comprises 917 residues: Autophagy-related protein 9 (917 aa).

Over 1–226 the chain is Cytoplasmic; sequence MASNIFSRLV…AGFWCIIVQR (226 aa). Disordered stretches follow at residues 16–37 and 119–177; these read RSFYEDLRQTDPDADLESRAGI and LLLS…QGRP. Residues 227-247 form a helical membrane-spanning segment; sequence ILELVNAAFVAVFLTFLSQCV. Residues 248 to 275 lie on the Lumenal side of the membrane; it reads DYHKLPHSKKMEDIIIPKCTQNMSLVWN. N-linked (GlcNAc...) asparagine glycosylation is present at Asn-269. A helical transmembrane segment spans residues 276-296; the sequence is VGLWLFAIYFICRCFGLIIQL. Residues 297-442 are Cytoplasmic-facing; sequence RQLKHLRDFY…RQLSQKLKSR (146 aa). The stretch at 443-463 is an intramembrane region; it reads FFFAGLMIFVMSPFIALYLIL. Over 464-539 the chain is Cytoplasmic; that stretch reads VYFLTYFHEF…ARTVSFITGS (76 aa). A helical transmembrane segment spans residues 540 to 560; it reads IVAVLGLATIFDSEAFLTFEI. Residues 561–564 lie on the Lumenal side of the membrane; the sequence is TPDR. The helical transmembrane segment at 565–585 threads the bilayer; that stretch reads SVLFYVSILATLWAVARGNIS. Topologically, residues 586–633 are cytoplasmic; sequence DDNEVYDPEFAMKSIIEFTHYEPDHWRGRLHSTEVKNEFSELYKPRPQ. Residue Lys-621 is modified to N6-acetyllysine. Residues 634 to 654 lie within the membrane without spanning it; the sequence is IFLEEILSILLTPLVLLVSLP. The Cytoplasmic portion of the chain corresponds to 655–917; sequence NSTDQIVDFF…FQQAHMHLRR (263 aa). The tract at residues 854–895 is disordered; it reads DARFGKLGDEDIDESGGALDESTWQTSPTKTLSRENSGANPQ. A compositionally biased stretch (polar residues) spans 875–895; the sequence is STWQTSPTKTLSRENSGANPQ.

Belongs to the ATG9 family. As to quaternary structure, homotrimer; forms a homotrimer with a central pore that forms a path between the two membrane leaflets. Interacts with HAT1. In terms of processing, acetylated by HAT1 at Lys-621, which increases the ability to bind vesicles during nutrient starvation induction. Phosphorylated by ATG1. ATG1 phosphorylation is required for preautophagosome elongation.

It localises to the preautophagosomal structure membrane. The protein localises to the cytoplasmic vesicle membrane. The protein resides in the vacuole membrane. It is found in the golgi apparatus membrane. Its subcellular location is the endoplasmic reticulum membrane. It carries out the reaction a 1,2-diacyl-sn-glycero-3-phosphocholine(in) = a 1,2-diacyl-sn-glycero-3-phosphocholine(out). It catalyses the reaction a 1,2-diacyl-sn-glycero-3-phospho-L-serine(in) = a 1,2-diacyl-sn-glycero-3-phospho-L-serine(out). The catalysed reaction is a 1,2-diacyl-sn-glycero-3-phosphoethanolamine(in) = a 1,2-diacyl-sn-glycero-3-phosphoethanolamine(out). The enzyme catalyses a 1,2-diacyl-sn-glycero-3-phospho-(1D-myo-inositol-3-phosphate)(in) = a 1,2-diacyl-sn-glycero-3-phospho-(1D-myo-inositol-3-phosphate)(out). Functionally, phospholipid scramblase involved in autophagy and cytoplasm to vacuole transport (Cvt) vesicle formation. Cycles between the preautophagosomal structure/phagophore assembly site (PAS) and the cytoplasmic vesicle pool and supplies membrane for the growing autophagosome. Lipid scramblase activity plays a key role in preautophagosomal structure/phagophore assembly by distributing the phospholipids that arrive through ATG2 from the cytoplasmic to the luminal leaflet of the bilayer, thereby driving autophagosomal membrane expansion. Required for mitophagy. Also involved in endoplasmic reticulum-specific autophagic process and is essential for the survival of cells subjected to severe ER stress. Different machineries are required for anterograde trafficking to the PAS during either the Cvt pathway or bulk autophagy and for retrograde trafficking. Plays a role in appressorium formation and pathogenicity. The sequence is that of Autophagy-related protein 9 from Pyricularia oryzae (strain 70-15 / ATCC MYA-4617 / FGSC 8958) (Rice blast fungus).